The following is a 167-amino-acid chain: METQRASLCLGRWSLWLLLLALVVPSASAQALSYREAVLRAVDRLNEQSSEANLYRLLELDQPPKADEDPGTPKPVSFTVKETVCPRPTWRPPELCDFKENGRVKQCVGTVTLDQIKDPLDITCNEIQSVGLLSRLRDFLSDRGRRLGEKIERIGQKIKDLSEFFQS.

The first 29 residues, methionine 1 to alanine 29, serve as a signal peptide directing secretion. The propeptide occupies glutamine 30–valine 130. 2 cysteine pairs are disulfide-bonded: cysteine 85/cysteine 96 and cysteine 107/cysteine 124.

Belongs to the cathelicidin family.

The protein localises to the secreted. Its function is as follows. Exerts antimicrobial activity against both Gram-positive and negative bacteria with minimal inhibitory concentrations ranging over 1-4 micro molar. Its activity appears to be mediated by its ability to damage bacterial membranes. This chain is Antibacterial peptide PMAP-37 (PMAP37), found in Sus scrofa (Pig).